Here is a 357-residue protein sequence, read N- to C-terminus: Phosphoribosylformylglycinamidine cyclo-ligase (357 aa).

The protein belongs to the AIR synthase family.

The protein localises to the cytoplasm. The enzyme catalyses 2-formamido-N(1)-(5-O-phospho-beta-D-ribosyl)acetamidine + ATP = 5-amino-1-(5-phospho-beta-D-ribosyl)imidazole + ADP + phosphate + H(+). It functions in the pathway purine metabolism; IMP biosynthesis via de novo pathway; 5-amino-1-(5-phospho-D-ribosyl)imidazole from N(2)-formyl-N(1)-(5-phospho-D-ribosyl)glycinamide: step 2/2. The chain is Phosphoribosylformylglycinamidine cyclo-ligase from Rhizobium rhizogenes (strain K84 / ATCC BAA-868) (Agrobacterium radiobacter).